We begin with the raw amino-acid sequence, 297 residues long: Aspartate carbamoyltransferase catalytic subunit (297 aa).

Residues Arg49 and Thr50 each contribute to the carbamoyl phosphate site. Position 77 (Lys77) interacts with L-aspartate. Residues Arg99, His129, and Gln132 each coordinate carbamoyl phosphate. 2 residues coordinate L-aspartate: Arg162 and Arg215. Positions 256 and 257 each coordinate carbamoyl phosphate.

Belongs to the aspartate/ornithine carbamoyltransferase superfamily. ATCase family. In terms of assembly, heterododecamer (2C3:3R2) of six catalytic PyrB chains organized as two trimers (C3), and six regulatory PyrI chains organized as three dimers (R2).

The catalysed reaction is carbamoyl phosphate + L-aspartate = N-carbamoyl-L-aspartate + phosphate + H(+). The protein operates within pyrimidine metabolism; UMP biosynthesis via de novo pathway; (S)-dihydroorotate from bicarbonate: step 2/3. Functionally, catalyzes the condensation of carbamoyl phosphate and aspartate to form carbamoyl aspartate and inorganic phosphate, the committed step in the de novo pyrimidine nucleotide biosynthesis pathway. The chain is Aspartate carbamoyltransferase catalytic subunit from Legionella pneumophila (strain Paris).